Here is a 191-residue protein sequence, read N- to C-terminus: Fe/S biogenesis protein NfuA (191 aa).

Residues C149 and C152 each coordinate [4Fe-4S] cluster.

The protein belongs to the NfuA family. Homodimer. The cofactor is [4Fe-4S] cluster.

Its function is as follows. Involved in iron-sulfur cluster biogenesis. Binds a 4Fe-4S cluster, can transfer this cluster to apoproteins, and thereby intervenes in the maturation of Fe/S proteins. Could also act as a scaffold/chaperone for damaged Fe/S proteins. In Pseudoalteromonas translucida (strain TAC 125), this protein is Fe/S biogenesis protein NfuA.